Here is a 589-residue protein sequence, read N- to C-terminus: UvrABC system protein C (589 aa).

The GIY-YIG domain maps to 13-90; sequence PNPGCYLFKN…IKTHTPKYNF (78 aa). The region spanning 194–229 is the UVR domain; it reads KDILKKLHHLMQKASEKMFYEKAQEYRDIIDSIKQT.

Belongs to the UvrC family. In terms of assembly, interacts with UvrB in an incision complex.

The protein resides in the cytoplasm. The UvrABC repair system catalyzes the recognition and processing of DNA lesions. UvrC both incises the 5' and 3' sides of the lesion. The N-terminal half is responsible for the 3' incision and the C-terminal half is responsible for the 5' incision. This is UvrABC system protein C from Aster yellows witches'-broom phytoplasma (strain AYWB).